The following is a 55-amino-acid chain: Large ribosomal subunit protein bL33 (55 aa).

This sequence belongs to the bacterial ribosomal protein bL33 family.

The protein is Large ribosomal subunit protein bL33 of Phenylobacterium zucineum (strain HLK1).